The chain runs to 462 residues: Argininosuccinate lyase (462 aa).

Belongs to the lyase 1 family. Argininosuccinate lyase subfamily.

Its subcellular location is the cytoplasm. It carries out the reaction 2-(N(omega)-L-arginino)succinate = fumarate + L-arginine. It functions in the pathway amino-acid biosynthesis; L-arginine biosynthesis; L-arginine from L-ornithine and carbamoyl phosphate: step 3/3. This Methylobacterium sp. (strain 4-46) protein is Argininosuccinate lyase.